A 121-amino-acid chain; its full sequence is Holo-[acyl-carrier-protein] synthase (121 aa).

2 residues coordinate Mg(2+): Asp-8 and Glu-58.

The protein belongs to the P-Pant transferase superfamily. AcpS family. Mg(2+) serves as cofactor.

The protein localises to the cytoplasm. It carries out the reaction apo-[ACP] + CoA = holo-[ACP] + adenosine 3',5'-bisphosphate + H(+). In terms of biological role, transfers the 4'-phosphopantetheine moiety from coenzyme A to a Ser of acyl-carrier-protein. This Bacillus velezensis (strain DSM 23117 / BGSC 10A6 / LMG 26770 / FZB42) (Bacillus amyloliquefaciens subsp. plantarum) protein is Holo-[acyl-carrier-protein] synthase.